The primary structure comprises 161 residues: MSSFTHFNDQGRAKMVDISDKKATVRTAIACSSIVVTKEIYDKISHNEIGKGDVLAVAQIAGIMAAKRTSDIIPMCHPLLLKGVDVSFDWKQSDEQYRLLIEVKVKTEGSTGVEMEALTAASATALTVYDMCKAVDKGMIIGETYLLEKTGGKSGDYTRKS.

Substrate contacts are provided by residues 75–77 (MCH) and 115–116 (ME). D130 is an active-site residue.

This sequence belongs to the MoaC family. In terms of assembly, homohexamer; trimer of dimers.

It catalyses the reaction (8S)-3',8-cyclo-7,8-dihydroguanosine 5'-triphosphate = cyclic pyranopterin phosphate + diphosphate. It participates in cofactor biosynthesis; molybdopterin biosynthesis. Catalyzes the conversion of (8S)-3',8-cyclo-7,8-dihydroguanosine 5'-triphosphate to cyclic pyranopterin monophosphate (cPMP). In Bacillus cereus (strain 03BB102), this protein is Cyclic pyranopterin monophosphate synthase.